We begin with the raw amino-acid sequence, 128 residues long: Cytochrome c-type biogenesis protein CcmE (128 aa).

Over 1-8 (MQKIVRNR) the chain is Cytoplasmic. The helical; Signal-anchor for type II membrane protein transmembrane segment at 9 to 29 (LIKIIICFCSACLGISIILYN) threads the bilayer. Topologically, residues 30 to 128 (LEKNIIFFFP…KHDENYRPPS (99 aa)) are periplasmic. Residues H120 and Y124 each contribute to the heme site.

Belongs to the CcmE/CycJ family.

It is found in the cell inner membrane. Functionally, heme chaperone required for the biogenesis of c-type cytochromes. Transiently binds heme delivered by CcmC and transfers the heme to apo-cytochromes in a process facilitated by CcmF and CcmH. The sequence is that of Cytochrome c-type biogenesis protein CcmE from Rickettsia prowazekii (strain Madrid E).